Here is a 247-residue protein sequence, read N- to C-terminus: ATP synthase subunit a, chloroplastic (247 aa).

Helical transmembrane passes span 38 to 58, 95 to 115, 134 to 154, 199 to 219, and 220 to 240; these read QVLITSWVVITILLGSVVIAV, VPFIGTMFLFIFVSNWSGALL, INTTVALALLTSAAYFYAGLS, LVVVVLVSLVPLVVPIPVMFL, and GLFTSGIQALIFATLAAAYIG.

The protein belongs to the ATPase A chain family. F-type ATPases have 2 components, CF(1) - the catalytic core - and CF(0) - the membrane proton channel. CF(1) has five subunits: alpha(3), beta(3), gamma(1), delta(1), epsilon(1). CF(0) has four main subunits: a, b, b' and c.

Its subcellular location is the plastid. The protein localises to the chloroplast thylakoid membrane. Key component of the proton channel; it plays a direct role in the translocation of protons across the membrane. This Agrostis stolonifera (Creeping bentgrass) protein is ATP synthase subunit a, chloroplastic.